We begin with the raw amino-acid sequence, 236 residues long: Phosphoglycolate phosphatase (236 aa).

The active-site Nucleophile is the Asp14. Residues Asp14, Asp16, and Asp177 each coordinate Mg(2+).

It belongs to the HAD-like hydrolase superfamily. CbbY/CbbZ/Gph/YieH family. Mg(2+) serves as cofactor.

It catalyses the reaction 2-phosphoglycolate + H2O = glycolate + phosphate. It functions in the pathway organic acid metabolism; glycolate biosynthesis; glycolate from 2-phosphoglycolate: step 1/1. In terms of biological role, specifically catalyzes the dephosphorylation of 2-phosphoglycolate. Is involved in the dissimilation of the intracellular 2-phosphoglycolate formed during the DNA repair of 3'-phosphoglycolate ends, a major class of DNA lesions induced by oxidative stress. The sequence is that of Phosphoglycolate phosphatase from Neisseria gonorrhoeae (strain ATCC 700825 / FA 1090).